A 361-amino-acid polypeptide reads, in one-letter code: Protein RecA (361 aa).

Residue 68–75 (GPESSGKT) coordinates ATP. The disordered stretch occupies residues 342-361 (PEGAKENISAKDDVAVDTKE). The segment covering 344-361 (GAKENISAKDDVAVDTKE) has biased composition (basic and acidic residues).

It belongs to the RecA family.

The protein localises to the cytoplasm. Can catalyze the hydrolysis of ATP in the presence of single-stranded DNA, the ATP-dependent uptake of single-stranded DNA by duplex DNA, and the ATP-dependent hybridization of homologous single-stranded DNAs. It interacts with LexA causing its activation and leading to its autocatalytic cleavage. The protein is Protein RecA of Clostridium beijerinckii (strain ATCC 51743 / NCIMB 8052) (Clostridium acetobutylicum).